The sequence spans 230 residues: Orotidine 5'-phosphate decarboxylase (230 aa).

Residues aspartate 11, lysine 34, 61–70 (DLKLHDIPNT), threonine 117, arginine 179, glutamine 188, glycine 208, and arginine 209 contribute to the substrate site. The active-site Proton donor is lysine 63.

This sequence belongs to the OMP decarboxylase family. Type 1 subfamily. In terms of assembly, homodimer.

The catalysed reaction is orotidine 5'-phosphate + H(+) = UMP + CO2. The protein operates within pyrimidine metabolism; UMP biosynthesis via de novo pathway; UMP from orotate: step 2/2. In terms of biological role, catalyzes the decarboxylation of orotidine 5'-monophosphate (OMP) to uridine 5'-monophosphate (UMP). This is Orotidine 5'-phosphate decarboxylase from Streptococcus equi subsp. zooepidemicus (strain H70).